Reading from the N-terminus, the 213-residue chain is FMN-dependent NADH:quinone oxidoreductase 1 (213 aa).

An FMN-binding site is contributed by 18-20 (SVS).

Belongs to the azoreductase type 1 family. As to quaternary structure, homodimer. Requires FMN as cofactor.

The catalysed reaction is 2 a quinone + NADH + H(+) = 2 a 1,4-benzosemiquinone + NAD(+). The enzyme catalyses N,N-dimethyl-1,4-phenylenediamine + anthranilate + 2 NAD(+) = 2-(4-dimethylaminophenyl)diazenylbenzoate + 2 NADH + 2 H(+). Its function is as follows. Quinone reductase that provides resistance to thiol-specific stress caused by electrophilic quinones. In terms of biological role, also exhibits azoreductase activity. Catalyzes the reductive cleavage of the azo bond in aromatic azo compounds to the corresponding amines. The polypeptide is FMN-dependent NADH:quinone oxidoreductase 1 (Bacillus cereus (strain ZK / E33L)).